The chain runs to 1170 residues: Cellulose synthase-like protein D2 (1170 aa).

Disordered stretches follow at residues 1-75 and 269-295; these read MASN…PESG and NEVD…EFTS. Positions 10–24 are enriched in low complexity; it reads RHSNSSRLSRMSYSG. Gly residues predominate over residues 273–288; the sequence is NGGGGGGGGGLGGGDG. Helical transmembrane passes span 311–331 and 341–361; these read VLSP…LFLA and AMWL…SWLL. D441 is a catalytic residue. A coiled-coil region spans residues 527–551; it reads HAREEIKAMKRQREAALDDVVEAVK. D873 is an active-site residue. The next 6 helical transmembrane spans lie at 955–975, 981–1001, 1027–1047, 1070–1090, 1104–1124, and 1134–1154; these read IFLI…QFIV, TFLT…VLEI, LAAV…SFTL, SLMI…AVGF, LLGG…FAKG, and TIVF…WVAI.

The protein belongs to the glycosyltransferase 2 family. Plant cellulose synthase-like D subfamily.

The protein resides in the golgi apparatus membrane. In terms of biological role, thought to be a Golgi-localized beta-glycan synthase that polymerize the backbones of noncellulosic polysaccharides (hemicelluloses) of plant cell wall. The sequence is that of Cellulose synthase-like protein D2 (CSLD2) from Oryza sativa subsp. indica (Rice).